A 279-amino-acid polypeptide reads, in one-letter code: MGIALENVNFIYQEGTPLASAALSDVSLTIEDGSYTALIGHTGSGKSTILQLLNGLLVPSQGSVRVFDTLITSTSKNKDIRQIRKQVGLVFQFAENQIFEETVLKDVAFGPQNFGVSEEDAVKTAREKLALVGIDESLFDRSPFELSGGQMRRVAIAGILAMEPSILVLDEPTAGLDPLGRKELMTLFKKLHQSGMTIVLVTHLMDDVAEYANQVYVMEKGRLVKGGKPSDVFQDVVFMEEVQLGVPKITAFCKRLADRGVSFKRLPIKIEEFKESLNG.

The ABC transporter domain occupies 3–245 (IALENVNFIY…VVFMEEVQLG (243 aa)). Residue 40 to 47 (GHTGSGKS) participates in ATP binding.

This sequence belongs to the ABC transporter superfamily. Energy-coupling factor EcfA family. As to quaternary structure, forms a stable energy-coupling factor (ECF) transporter complex composed of 2 membrane-embedded substrate-binding proteins (S component), 2 ATP-binding proteins (A component) and 2 transmembrane proteins (T component).

It is found in the cell membrane. Its function is as follows. ATP-binding (A) component of a common energy-coupling factor (ECF) ABC-transporter complex. Unlike classic ABC transporters this ECF transporter provides the energy necessary to transport a number of different substrates. The protein is Energy-coupling factor transporter ATP-binding protein EcfA2 of Streptococcus pneumoniae serotype 2 (strain D39 / NCTC 7466).